The primary structure comprises 199 residues: CASP-like protein 4C1 (199 aa).

Over 1–35 (MESGSVANDSGPLNSTPDVHLYGKTAAMKQRRSNT) the chain is Cytoplasmic. A helical transmembrane segment spans residues 36–56 (MLFVFRLLTFSFSLAAVLVMG). At 57-80 (TNKQKIRSAPQYLEVAWHDFDPFR) the chain is on the extracellular side. The helical transmembrane segment at 81–101 (YVFAVNAIICVYSFVETWLAV) threads the bilayer. Residues 102–124 (YTLSRGTLLLPETFQVWFDYGHD) lie on the Cytoplasmic side of the membrane. A helical membrane pass occupies residues 125–145 (QGFACLLFSANSVGIAMAQLL). At 146–169 (QSGSTLIQGQYYCSDAGAYCTQAR) the chain is on the extracellular side. The helical transmembrane segment at 170-190 (VSIAMGFGAFLFLALSSFLTG) threads the bilayer. Residues 191 to 199 (LRVARWYLP) lie on the Cytoplasmic side of the membrane.

The protein belongs to the Casparian strip membrane proteins (CASP) family. Homodimer and heterodimers.

It is found in the cell membrane. The polypeptide is CASP-like protein 4C1 (Physcomitrium patens (Spreading-leaved earth moss)).